The chain runs to 141 residues: Large-conductance mechanosensitive channel (141 aa).

3 helical membrane-spanning segments follow: residues 8–28, 38–58, and 80–100; these read FALKGNVVDLAIGVIIGAAFG, IIMPFFGALGGLDFSNYFFPL, and GNFLTVAVNFLIIAFVLFLIV.

Belongs to the MscL family. Homopentamer.

It localises to the cell inner membrane. Its function is as follows. Channel that opens in response to stretch forces in the membrane lipid bilayer. May participate in the regulation of osmotic pressure changes within the cell. This is Large-conductance mechanosensitive channel from Beijerinckia indica subsp. indica (strain ATCC 9039 / DSM 1715 / NCIMB 8712).